The following is a 662-amino-acid chain: uncharacterized protein (662 aa).

Positions 145, 164, 173, 184, and 190 each coordinate FAD. A disordered region spans residues 638 to 662 (SRLETSGVPREGVQRPGSRLRRRPS).

This sequence belongs to the FAD-binding monooxygenase family. It depends on FAD as a cofactor.

This is an uncharacterized protein from Sinorhizobium fredii (strain NBRC 101917 / NGR234).